A 299-amino-acid polypeptide reads, in one-letter code: Neomycin C epimerase (299 aa).

Residues 10 to 222 form the Radical SAM core domain; sequence PVRQVRAYRN…WNHIFETGRR (213 aa). [4Fe-4S] cluster is bound by residues Cys-26, Cys-30, Cys-33, Cys-226, and Cys-247. The active-site Proton donor is the Cys-249. Residues Cys-271 and Cys-274 each contribute to the [4Fe-4S] cluster site.

This sequence belongs to the radical SAM superfamily. Requires [4Fe-4S] cluster as cofactor.

The catalysed reaction is neomycin C + AH2 + S-adenosyl-L-methionine = neomycin B + 5'-deoxyadenosine + L-methionine + A + H(+). The protein operates within antibiotic biosynthesis; neomycin biosynthesis. In terms of biological role, catalyzes the last step of neomycin B biosynthesis, i.e. the irreversible epimerization at C-5''' of neomycin C to give neomycin B. To a lesser extent, is also able to convert neomycin Y2 to neomycin Y1. This chain is Neomycin C epimerase, found in Streptomyces fradiae (Streptomyces roseoflavus).